Reading from the N-terminus, the 206-residue chain is Alpha-1-acid glycoprotein 3 (206 aa).

An N-terminal signal peptide occupies residues Met1–Ala18. N-linked (GlcNAc...) asparagine glycosylation is found at Asn33, Asn75, and Asn103. A disulfide bond links Cys90 and Cys183. The tract at residues Glu187–Ala206 is disordered.

It belongs to the calycin superfamily. Lipocalin family.

It localises to the secreted. Its function is as follows. Functions as a transport protein in the blood stream. Binds various ligands in the interior of its beta-barrel domain. Appears to function in modulating the activity of the immune system during the acute-phase reaction. This Mus musculus (Mouse) protein is Alpha-1-acid glycoprotein 3 (Orm3).